The following is a 114-amino-acid chain: Large ribosomal subunit protein bL19 (114 aa).

It belongs to the bacterial ribosomal protein bL19 family.

In terms of biological role, this protein is located at the 30S-50S ribosomal subunit interface and may play a role in the structure and function of the aminoacyl-tRNA binding site. In Listeria innocua serovar 6a (strain ATCC BAA-680 / CLIP 11262), this protein is Large ribosomal subunit protein bL19 (rplS).